Here is a 370-residue protein sequence, read N- to C-terminus: Leucine-rich repeat and transmembrane domain-containing protein 2 (370 aa).

Positions 1-35 (MLAPGSSPGQRGRLALQWRQVSWITCWIALYAVEA) are cleaved as a signal peptide. One can recognise an LRRNT domain in the interval 36 to 68 (LPTCPFSCKCDSRSLEVDCSGLGLTTVPPDVPA). The Extracellular segment spans residues 36–310 (LPTCPFSCKC…PASVRRAMGT (275 aa)). LRR repeat units lie at residues 69-90 (ATRT…AFAN), 93-114 (SLQR…IFGD), 117-139 (NLTE…LRHS), 141-162 (LLRH…LFDG), and 165-186 (ALRS…TFEP). Asn90 carries N-linked (GlcNAc...) asparagine glycosylation. 2 N-linked (GlcNAc...) asparagine glycosylation sites follow: Asn117 and Asn125. Residues 198-252 (NPWECDCNLREFKHWMEWFSYRGGRLDQLACTLPKELRGKDMRMVPMEMFNYCSQ) enclose the LRRCT domain. The N-linked (GlcNAc...) asparagine glycan is linked to Asn257. Positions 261–300 (GLDIPGPPCTKASPEPAKPKPGAEPEPEPSTACPQKQRHR) are disordered. The helical transmembrane segment at 311–331 (VIIAGVVCGVVCIMMVVAAAY) threads the bilayer. Topologically, residues 332–370 (GCIYASLMAKYHRELKKRQPLMGDPEGEHEDQKQISSVA) are cytoplasmic. Residues 351–370 (PLMGDPEGEHEDQKQISSVA) are disordered.

The protein localises to the membrane. In Homo sapiens (Human), this protein is Leucine-rich repeat and transmembrane domain-containing protein 2 (LRTM2).